Here is a 318-residue protein sequence, read N- to C-terminus: Receptor homology region, transmembrane domain- and RING domain-containing protein 6 (318 aa).

Residues Met-1–Ser-20 form the signal peptide. The Lumenal portion of the chain corresponds to Val-22–Trp-162. The cysteines at positions 62 and 87 are disulfide-linked. Positions Glu-70 to Tyr-143 constitute a PA domain. N-linked (GlcNAc...) asparagine glycosylation occurs at Asn-121. Residues Ser-163–Phe-183 form a helical membrane-spanning segment. Topologically, residues Ser-184 to Leu-318 are cytoplasmic. The segment at Cys-233–Lys-275 adopts an RING-type; atypical zinc-finger fold.

It is found in the prevacuolar compartment membrane. The protein localises to the protein storage vacuole membrane. In terms of biological role, involved in the trafficking of vacuolar proteins. May function as a sorting receptor for protein trafficking to the protein storage vacuole (PSV). In Arabidopsis thaliana (Mouse-ear cress), this protein is Receptor homology region, transmembrane domain- and RING domain-containing protein 6 (RMR6).